Reading from the N-terminus, the 1031-residue chain is uncharacterized protein (1031 aa).

Residues 50-85 form an SWIM-type zinc finger; it reads FKVQINLKTAAAHLDCSCSNDKQNCVHIIAALLKYN. The Helicase ATP-binding domain occupies 590–751; that stretch reads RALEDNQFGG…WSCFDFVLPN (162 aa). Residue 603–610 coordinates ATP; that stretch reads DEMGLGKT. Residues 702-705 carry the DEAQ box motif; it reads DEAQ. The Helicase C-terminal domain maps to 868–1022; the sequence is ALNIIYEALE…EDVNFFKSLS (155 aa).

Belongs to the SNF2/RAD54 helicase family.

This is an uncharacterized protein from Mycoplasma genitalium (strain ATCC 33530 / DSM 19775 / NCTC 10195 / G37) (Mycoplasmoides genitalium).